The chain runs to 296 residues: Formamidopyrimidine-DNA glycosylase (296 aa).

Residue P2 is the Schiff-base intermediate with DNA of the active site. The active-site Proton donor is the E3. K61 functions as the Proton donor; for beta-elimination activity in the catalytic mechanism. Residues H104, R123, and K169 each coordinate DNA. The FPG-type zinc-finger motif lies at 255–289 (DAYGREGEPCRRCGAIMRREKFMNRSSFYCPRCQP). Catalysis depends on R279, which acts as the Proton donor; for delta-elimination activity.

The protein belongs to the FPG family. As to quaternary structure, monomer. The cofactor is Zn(2+).

It catalyses the reaction Hydrolysis of DNA containing ring-opened 7-methylguanine residues, releasing 2,6-diamino-4-hydroxy-5-(N-methyl)formamidopyrimidine.. It carries out the reaction 2'-deoxyribonucleotide-(2'-deoxyribose 5'-phosphate)-2'-deoxyribonucleotide-DNA = a 3'-end 2'-deoxyribonucleotide-(2,3-dehydro-2,3-deoxyribose 5'-phosphate)-DNA + a 5'-end 5'-phospho-2'-deoxyribonucleoside-DNA + H(+). Its function is as follows. Involved in base excision repair of DNA damaged by oxidation or by mutagenic agents. Acts as a DNA glycosylase that recognizes and removes damaged bases. Has a preference for oxidized purines, such as 7,8-dihydro-8-oxoguanine (8-oxoG). Has AP (apurinic/apyrimidinic) lyase activity and introduces nicks in the DNA strand. Cleaves the DNA backbone by beta-delta elimination to generate a single-strand break at the site of the removed base with both 3'- and 5'-phosphates. The chain is Formamidopyrimidine-DNA glycosylase from Mycobacterium sp. (strain JLS).